The following is a 235-amino-acid chain: Ferric nitrobindin-like protein (235 aa).

The segment at 1–59 (MSDLASEGSDPAERASEHSNGNAPADRPARRSGDQAVADAAERAKATGSRNIPVLPDLP) is disordered. Residues 85-91 (GVWRGEG) carry the GXWXGXG motif.

It belongs to the nitrobindin family.

This is Ferric nitrobindin-like protein from Nocardia farcinica (strain IFM 10152).